A 2002-amino-acid polypeptide reads, in one-letter code: Methylcytosine dioxygenase TET2 (2002 aa).

Basic and acidic residues predominate over residues 1-11 (MEQDRTNHVEG). The interval 1–22 (MEQDRTNHVEGNRLSPFLIPSP) is disordered. Phosphoserine is present on residues Ser15, Ser75, and Ser99. The span at 113 to 124 (KQDQKANGERRN) shows a compositional bias: basic and acidic residues. 7 disordered regions span residues 113–154 (KQDQ…VSSV), 266–287 (HPSH…LPPK), 349–368 (GEEF…GSSE), 390–488 (DSFS…VNRN), 703–748 (LNQQ…QQKL), 930–949 (VPDQ…TQKH), and 1075–1095 (DSHT…PTKR). 2 stretches are compositionally biased toward polar residues: residues 126-143 (GVSQ…NVSD) and 267-283 (PSHT…SNSE). The span at 397-416 (TPPPPSQLLLSPPPPLPQVP) shows a compositional bias: pro residues. Composition is skewed to polar residues over residues 479–488 (RPQNNCVNRN) and 703–718 (LNQQ…NSHL). Positions 731–748 (QPSQSSHLPQNQQQQQKL) are enriched in low complexity. Composition is skewed to polar residues over residues 935–944 (GSHTQTPPQK) and 1081–1095 (LEQQ…PTKR). A phosphoserine mark is found at Ser1107 and Ser1109. Positions 1133, 1135, 1193, 1219, and 1221 each coordinate Zn(2+). Arg1261 serves as a coordination point for 2-oxoglutarate. Zn(2+) contacts are provided by Cys1271, Cys1273, Cys1289, and Cys1298. The interval 1290-1303 (SWSMYYNGCKFARS) is interaction with DNA. Lys1299 is covalently cross-linked (Glycyl lysine isopeptide (Lys-Gly) (interchain with G-Cter in ubiquitin)). Residue Cys1358 coordinates Zn(2+). Cys1374 contributes to the 2-oxoglutarate binding site. Residue His1380 participates in Zn(2+) binding. Positions 1382 and 1384 each coordinate Fe cation. Residue Asn1387 participates in substrate binding. His1416 is a binding site for 2-oxoglutarate. Disordered regions lie at residues 1475 to 1507 (AAEK…NASQ) and 1521 to 1587 (VMQQ…HTSD). Low complexity predominate over residues 1477–1487 (EKLSSLENSSN). The segment covering 1496–1507 (PSRTKQTENASQ) has biased composition (polar residues). Low complexity-rich tracts occupy residues 1523–1532 (QQSQQPQPLQ) and 1539–1551 (QQQQ…QPHH). The span at 1554–1568 (TESVNSYSASGSTNP) shows a compositional bias: polar residues. Arg1682 carries the asymmetric dimethylarginine modification. Fe cation is bound at residue His1881. A 2-oxoglutarate-binding site is contributed by 1896–1898 (RIS). 1902–1904 (YQH) provides a ligand contact to substrate. A Zn(2+)-binding site is contributed by His1912. A disordered region spans residues 1932 to 1961 (CEKYGPDYVPQKSHGKKVKREPAEPHETSE). Basic and acidic residues predominate over residues 1951–1960 (REPAEPHETS).

This sequence belongs to the TET family. Interacts with HCFC1. Interacts with OGT. Interacts with PROSER1; this interaction mediates TET2 O-GlcNAcylation and stability by promoting the interaction between OGT and TET2. Directly interacts (via C-terminus) with the DCAF1 component of the CRL4(VprBP) E3 ubiquitin-protein ligase complex. Fe(2+) serves as cofactor. Requires Zn(2+) as cofactor. May be glycosylated. It is unclear whether interaction with OGT leads to GlcNAcylation. According to a report, it is not GlcNAcylated by OGT. In contrast, another group reports GlcNAcylation by OGT in mouse ortholog. Post-translationally, monoubiquitinated at Lys-1299 by the DCX (DDB1-CUL4-X-box) E3 ubiquitin-protein ligase complex called CRL4(VprBP) or CUL4A-RBX1-DDB1-DCAF1/VPRBP complex; this modification promotes binding to DNA. In terms of processing, acetylated. Deacetylase HDAC6 acts as a valine sensor by binding to valine through its primate-specific SE14 repeat region and deacetylates TET2 following valine deprivation which promotes TET2-dependent DNA demethylation. Broadly expressed. Highly expressed in hematopoietic cells; highest expression observed in granulocytes. Expression is reduced in granulocytes from peripheral blood of patients affected by myelodysplastic syndromes.

Its subcellular location is the nucleus. The protein localises to the chromosome. It carries out the reaction a 5-methyl-2'-deoxycytidine in DNA + 2-oxoglutarate + O2 = a 5-hydroxymethyl-2'-deoxycytidine in DNA + succinate + CO2. It catalyses the reaction a 5-hydroxymethyl-2'-deoxycytidine in DNA + 2-oxoglutarate + O2 = a 5-formyl-2'-deoxycytidine in DNA + succinate + CO2 + H2O. The catalysed reaction is a 5-formyl-2'-deoxycytidine in DNA + 2-oxoglutarate + O2 = a 5-carboxyl-2'-deoxycytidine in DNA + succinate + CO2 + H(+). Dioxygenase that catalyzes the conversion of the modified genomic base 5-methylcytosine (5mC) into 5-hydroxymethylcytosine (5hmC) and plays a key role in active DNA demethylation. Has a preference for 5-hydroxymethylcytosine in CpG motifs. Also mediates subsequent conversion of 5hmC into 5-formylcytosine (5fC), and conversion of 5fC to 5-carboxylcytosine (5caC). Conversion of 5mC into 5hmC, 5fC and 5caC probably constitutes the first step in cytosine demethylation. Methylation at the C5 position of cytosine bases is an epigenetic modification of the mammalian genome which plays an important role in transcriptional regulation. In addition to its role in DNA demethylation, also involved in the recruitment of the O-GlcNAc transferase OGT to CpG-rich transcription start sites of active genes, thereby promoting histone H2B GlcNAcylation by OGT. This Homo sapiens (Human) protein is Methylcytosine dioxygenase TET2 (TET2).